A 178-amino-acid polypeptide reads, in one-letter code: PRA1 family protein 2 (178 aa).

The Cytoplasmic segment spans residues 1–41 (MSEVRLPPLRALDDFVLGSARLAAPDPCDPQRWCHRVINNL). A helical transmembrane segment spans residues 42-62 (LYYQTNYLLCFGIGLALAGYV). Residues 63–64 (RP) are Extracellular-facing. Residues 65-85 (LHTLLSALVVAVALGVLVWAA) form a helical membrane-spanning segment. The Cytoplasmic portion of the chain corresponds to 86 to 96 (ETRAAVRRCRR). A helical membrane pass occupies residues 97–119 (SHPAACLAAVLAVGLLVLWVAGG). Residues 120–122 (ACT) lie on the Extracellular side of the membrane. Residues 123–140 (FLFSIAGPVLLILVHASL) form a helical membrane-spanning segment. Residues 141 to 178 (RLRNLKNKIENKIESIGLKRTPMGLLLEALGQEQEAGS) are Cytoplasmic-facing.

The protein belongs to the PRA1 family. Interacts with CCR5 and GDE1. Strong expression in the brain, small intestine, lung, spleen, and pancreas as well as in tumor tissues of the breast, colon, lung and ovary, with a weaker expression in normal tissues of the same patient. High expression in neuroblastic tumors. Strongly expressed in Purkinje cells and more moderately in cells of the molecular and the granular layers in the cerebellum. Detected in neuronal cells, but not in non-neuronal cells in the cerebral cortex, hippocampus, and lateral ventricles.

The protein resides in the endosome membrane. Functionally, may be involved in ER/Golgi transport and vesicular traffic. Plays a proapoptotic role in cerulenin-induced neuroblastoma apoptosis. In Homo sapiens (Human), this protein is PRA1 family protein 2 (PRAF2).